A 786-amino-acid chain; its full sequence is DNA ligase (786 aa).

Residues 32–36 (DAEYD), 81–82 (SL), and E121 each bind NAD(+). The N6-AMP-lysine intermediate role is filled by K123. Residues R144, E181, K297, and K321 each contribute to the NAD(+) site. Zn(2+)-binding residues include C415, C418, C445, and C451. The BRCT domain maps to 703-786 (AEGLPLAGQT…EQLKSYGIEA (84 aa)).

It belongs to the NAD-dependent DNA ligase family. LigA subfamily. Requires Mg(2+) as cofactor. It depends on Mn(2+) as a cofactor.

It carries out the reaction NAD(+) + (deoxyribonucleotide)n-3'-hydroxyl + 5'-phospho-(deoxyribonucleotide)m = (deoxyribonucleotide)n+m + AMP + beta-nicotinamide D-nucleotide.. DNA ligase that catalyzes the formation of phosphodiester linkages between 5'-phosphoryl and 3'-hydroxyl groups in double-stranded DNA using NAD as a coenzyme and as the energy source for the reaction. It is essential for DNA replication and repair of damaged DNA. This chain is DNA ligase, found in Ectopseudomonas mendocina (strain ymp) (Pseudomonas mendocina).